We begin with the raw amino-acid sequence, 364 residues long: TD and POZ domain-containing protein 2 (364 aa).

In terms of domain architecture, MATH spans 19 to 149 (EFCYEWTISN…KDKLTLCCKV (131 aa)). The BTB domain maps to 188 to 255 (TDCSLLVAGH…IYTGKAPTLH (68 aa)).

It belongs to the Tdpoz family.

The protein is TD and POZ domain-containing protein 2 of Mus musculus (Mouse).